Here is a 357-residue protein sequence, read N- to C-terminus: Dihydroorotate dehydrogenase (quinone) (357 aa).

Residues 61–65 (AGFDK) and Thr85 each bind FMN. Substrate is bound at residue Lys65. 110–114 (NRFGF) lines the substrate pocket. FMN contacts are provided by Asn141 and Asn172. Substrate is bound at residue Asn172. The active-site Nucleophile is Ser175. Substrate is bound at residue Asn177. FMN-binding residues include Lys217 and Gly245. A substrate-binding site is contributed by 246-247 (NT). FMN is bound by residues Gly268, Gly297, and 318–319 (YS).

It belongs to the dihydroorotate dehydrogenase family. Type 2 subfamily. As to quaternary structure, monomer. It depends on FMN as a cofactor.

It localises to the cell membrane. It carries out the reaction (S)-dihydroorotate + a quinone = orotate + a quinol. It participates in pyrimidine metabolism; UMP biosynthesis via de novo pathway; orotate from (S)-dihydroorotate (quinone route): step 1/1. Its function is as follows. Catalyzes the conversion of dihydroorotate to orotate with quinone as electron acceptor. The protein is Dihydroorotate dehydrogenase (quinone) of Xanthobacter autotrophicus (strain ATCC BAA-1158 / Py2).